The chain runs to 461 residues: Argininosuccinate lyase (461 aa).

Belongs to the lyase 1 family. Argininosuccinate lyase subfamily.

It is found in the cytoplasm. The enzyme catalyses 2-(N(omega)-L-arginino)succinate = fumarate + L-arginine. It participates in amino-acid biosynthesis; L-arginine biosynthesis; L-arginine from L-ornithine and carbamoyl phosphate: step 3/3. The protein is Argininosuccinate lyase of Desulfitobacterium hafniense (strain DSM 10664 / DCB-2).